The following is a 379-amino-acid chain: 3-dehydroquinate synthase (379 aa).

Residues 113–117 (GVIGD), 137–138 (TS), K150, and K159 contribute to the NAD(+) site. Zn(2+) is bound by residues E192, H256, and H274.

The protein belongs to the sugar phosphate cyclases superfamily. Dehydroquinate synthase family. Co(2+) is required as a cofactor. Zn(2+) serves as cofactor. It depends on NAD(+) as a cofactor.

The protein resides in the cytoplasm. The catalysed reaction is 7-phospho-2-dehydro-3-deoxy-D-arabino-heptonate = 3-dehydroquinate + phosphate. Its pathway is metabolic intermediate biosynthesis; chorismate biosynthesis; chorismate from D-erythrose 4-phosphate and phosphoenolpyruvate: step 2/7. Its function is as follows. Catalyzes the conversion of 3-deoxy-D-arabino-heptulosonate 7-phosphate (DAHP) to dehydroquinate (DHQ). In Zymomonas mobilis subsp. mobilis (strain ATCC 31821 / ZM4 / CP4), this protein is 3-dehydroquinate synthase.